The primary structure comprises 399 residues: Large envelope protein (399 aa).

Met1 carries the N-acetylmethionine modification. Gly2 carries the N-myristoyl glycine; by host lipid modification. The interval 2 to 118 (GLSWTVPLEW…PPLRDSHPQA (117 aa)) is pre-S1. A pre-S region spans residues 2–173 (GLSWTVPLEW…FSRIGDPAPN (172 aa)). Topologically, residues 2–180 (GLSWTVPLEW…APNMENITSG (179 aa)) are virion surface; in external conformation. At 2–252 (GLSWTVPLEW…PGYRWMCLRR (251 aa)) the chain is on the intravirion; in internal conformation side. Residue Ser4 is glycosylated (N-linked (GlcNAc...) asparagine). Positions 69–117 (PHGGLLGWSPQSQGTLTTLPADPPPASTNRQSGRQPTPISPPLRDSHPQ) are disordered. Residues 119–173 (MQWNSTAFHQALQNPKVRGLYFPAGGSSSGIVNPVPTIASHISSIFSRIGDPAPN) form a pre-S2 region. Residues 181–201 (FLGPLLVLQAGFFLLTRILTI) traverse the membrane as a helical segment. Over 202-252 (PQSLDSWWTSLNFLGGVPVCPGLNSQSPTSNHSPISCPPTCPGYRWMCLRR) the chain is Intravirion; in external conformation. Residues 253 to 273 (FIIFLFILLLCLIFLLVLLDY) form a helical membrane-spanning segment. The Virion surface segment spans residues 274–347 (QGMLPVCPLI…WASVRFSWLS (74 aa)). Asn319 carries N-linked (GlcNAc...) asparagine; by host glycosylation. The helical transmembrane segment at 348–368 (LLVPFVQWFVGLSPTVWLSAI) threads the bilayer. The Intravirion portion of the chain corresponds to 369–374 (WMMWYW). A helical membrane pass occupies residues 375–397 (GPNLYNILSPFIPLLPIFFCLWV). Residues 398–399 (YI) lie on the Virion surface side of the membrane.

The protein belongs to the orthohepadnavirus major surface antigen family. In its internal form (Li-HBsAg), interacts with the capsid protein and with the isoform S. Interacts with host chaperone CANX. In terms of assembly, associates with host chaperone CANX through its pre-S2 N glycan; this association may be essential for isoform M proper secretion. As to quaternary structure, interacts with isoform L. Interacts with the antigens of satellite virus HDV (HDVAgs); this interaction is required for encapsidation of HDV genomic RNA. Post-translationally, isoform M is N-terminally acetylated by host at a ratio of 90%, and N-glycosylated by host at the pre-S2 region. In terms of processing, myristoylated.

The protein localises to the virion membrane. The large envelope protein exists in two topological conformations, one which is termed 'external' or Le-HBsAg and the other 'internal' or Li-HBsAg. In its external conformation the protein attaches the virus to cell receptors and thereby initiating infection. This interaction determines the species specificity and liver tropism. This attachment induces virion internalization predominantly through caveolin-mediated endocytosis. The large envelope protein also assures fusion between virion membrane and endosomal membrane. In its internal conformation the protein plays a role in virion morphogenesis and mediates the contact with the nucleocapsid like a matrix protein. In terms of biological role, the middle envelope protein plays an important role in the budding of the virion. It is involved in the induction of budding in a nucleocapsid independent way. In this process the majority of envelope proteins bud to form subviral lipoprotein particles of 22 nm of diameter that do not contain a nucleocapsid. The polypeptide is Large envelope protein (Hepatitis B virus genotype G (isolate IG29227/2000) (HBV-G)).